The chain runs to 147 residues: Hemoglobin subunit epsilon (147 aa).

One can recognise a Globin domain in the interval 3–147 (HFTAEEKSTI…VATALAHKYH (145 aa)). Residues Ser-14 and Ser-51 each carry the phosphoserine modification. Heme b-binding residues include His-64 and His-93.

This sequence belongs to the globin family. Heterotetramer of two alpha chains and two epsilon chains in early embryonic hemoglobin Gower-2; two zeta chains and two epsilon chains in early embryonic hemoglobin Gower-1. In terms of tissue distribution, red blood cells.

Its function is as follows. The epsilon chain is a beta-type chain of early mammalian embryonic hemoglobin. The sequence is that of Hemoglobin subunit epsilon (HBE1) from Microcebus murinus (Gray mouse lemur).